Here is a 948-residue protein sequence, read N- to C-terminus: RNA polymerase-associated protein RapA (948 aa).

The Helicase ATP-binding domain occupies 164-332 (EVADRSAPRV…FARLRLLDPN (169 aa)). 177-184 (DEVGLGKT) contributes to the ATP binding site. Positions 278 to 281 (DEAH) match the DEAH box motif. One can recognise a Helicase C-terminal domain in the interval 473-627 (RVDWLIDTLK…TCPTGNALQH (155 aa)).

The protein belongs to the SNF2/RAD54 helicase family. RapA subfamily. As to quaternary structure, interacts with the RNAP. Has a higher affinity for the core RNAP than for the holoenzyme. Its ATPase activity is stimulated by binding to RNAP.

Transcription regulator that activates transcription by stimulating RNA polymerase (RNAP) recycling in case of stress conditions such as supercoiled DNA or high salt concentrations. Probably acts by releasing the RNAP, when it is trapped or immobilized on tightly supercoiled DNA. Does not activate transcription on linear DNA. Probably not involved in DNA repair. This Pseudomonas putida (strain W619) protein is RNA polymerase-associated protein RapA.